The primary structure comprises 321 residues: Glucokinase (321 aa).

8 to 13 (GDVGGT) contacts ATP.

Belongs to the bacterial glucokinase family.

The protein localises to the cytoplasm. The catalysed reaction is D-glucose + ATP = D-glucose 6-phosphate + ADP + H(+). Its function is as follows. Not highly important in E.coli as glucose is transported into the cell by the PTS system already as glucose 6-phosphate. This Escherichia coli O139:H28 (strain E24377A / ETEC) protein is Glucokinase.